A 383-amino-acid polypeptide reads, in one-letter code: tRNA(Met) cytidine acetate ligase (383 aa).

ATP contacts are provided by residues 7 to 20 (ITEYNPLHNGHRYH), glycine 101, asparagine 150, and arginine 175.

It belongs to the TmcAL family.

Its subcellular location is the cytoplasm. It carries out the reaction cytidine(34) in elongator tRNA(Met) + acetate + ATP = N(4)-acetylcytidine(34) in elongator tRNA(Met) + AMP + diphosphate. In terms of biological role, catalyzes the formation of N(4)-acetylcytidine (ac(4)C) at the wobble position of elongator tRNA(Met), using acetate and ATP as substrates. First activates an acetate ion to form acetyladenylate (Ac-AMP) and then transfers the acetyl group to tRNA to form ac(4)C34. The sequence is that of tRNA(Met) cytidine acetate ligase from Lactiplantibacillus plantarum (strain ATCC BAA-793 / NCIMB 8826 / WCFS1) (Lactobacillus plantarum).